We begin with the raw amino-acid sequence, 64 residues long: Small cysteine-rich protein (64 aa).

The N-terminal stretch at 1-17 is a signal peptide; that stretch reads FVCVQARQIDPEQILRT. The propeptide occupies 18-19; the sequence is PE.

Post-translationally, contains 4 disulfide bonds.

It is found in the secreted. The protein localises to the nematocyst. The protein is Small cysteine-rich protein of Anemonia viridis (Snakelocks anemone).